The sequence spans 85 residues: Large ribosomal subunit protein bL27 (85 aa).

Positions methionine 1 to leucine 21 are disordered. Positions alanine 7–glutamine 19 are enriched in polar residues.

The protein belongs to the bacterial ribosomal protein bL27 family.

The polypeptide is Large ribosomal subunit protein bL27 (Beutenbergia cavernae (strain ATCC BAA-8 / DSM 12333 / CCUG 43141 / JCM 11478 / NBRC 16432 / NCIMB 13614 / HKI 0122)).